Reading from the N-terminus, the 433-residue chain is Agnestins efflux protein AgnL12 (433 aa).

2 stretches are compositionally biased toward polar residues: residues 1–10 (MSRSTSTELQ) and 25–40 (SIAS…PPST). The segment at 1–40 (MSRSTSTELQQELPASKEVPPDPTSIASSETASGSKPPST) is disordered. A run of 12 helical transmembrane segments spans residues 47–67 (ILVL…TNAF), 87–107 (ISWI…ISGY), 116–136 (LLIC…SLST), 141–161 (IFLT…LPAM), 174–194 (LAMG…PIAL), 205–225 (WTVR…CLAI), 248–268 (VMIF…SPFF), 285–305 (FYMV…PGLI), 309–329 (VGNY…ACCW), 335–355 (VGGI…VISL), 370–390 (GVAM…GTPI), and 401–421 (LGLS…ILLA).

Belongs to the major facilitator superfamily. Monocarboxylate porter (TC 2.A.1.13) family.

The protein localises to the cell membrane. Its function is as follows. Efflux pump that may be involved in the secretion of agnestins, dihydroxy-xanthone metabolites. This chain is Agnestins efflux protein AgnL12, found in Paecilomyces divaricatus (Penicillium divaricatum).